Reading from the N-terminus, the 470-residue chain is Uronate isomerase (470 aa).

Belongs to the metallo-dependent hydrolases superfamily. Uronate isomerase family.

The catalysed reaction is D-glucuronate = D-fructuronate. The enzyme catalyses aldehydo-D-galacturonate = keto-D-tagaturonate. It participates in carbohydrate metabolism; pentose and glucuronate interconversion. In Escherichia coli O157:H7 (strain EC4115 / EHEC), this protein is Uronate isomerase.